Reading from the N-terminus, the 442-residue chain is Inhibitor of Apoptosis OPG037 (442 aa).

ANK repeat units follow at residues 67–96 (DGNY…DPNA), 100–131 (HNKT…KINN), 203–233 (DGNT…DVNK), 237–267 (FGDS…VITD), 292–321 (YDST…ICED), and 323–347 (MYYA…SVDS).

The protein belongs to the orthopoxvirus OPG037 family. In terms of assembly, may interact with host caspase-9-Apaf-1 complex.

The protein localises to the host cytoplasm. Its function is as follows. Inhibits host apoptosis. Acts by associating with host apoptosome. The protein is Inhibitor of Apoptosis OPG037 (OPG037) of Monkeypox virus.